The sequence spans 272 residues: MEHKKIAFIGAGNMVRAIVSGLVANGYPAQNITATAPSEARRLPLEQDFGIRTTSDNIQAATEADVVVLSVKPQMMADVCKPLQAIDFTNKLVISIAAGINCSRLDDMLATKLNLVRVMPNTPSQLGLGMSGLFAPIHVTEHDKAFAAELMEAVGKVCWVEQESGINNVIAAAGSAPAYFFLFMEAMQAEAIAQGFDKESARLLVQQAALGAASMVVSNPETELSTLRENVTSKGGTTAEALRTFNEHQLSDIVAKAMQAAVARAEEMEKLF.

This sequence belongs to the pyrroline-5-carboxylate reductase family.

The protein resides in the cytoplasm. It carries out the reaction L-proline + NADP(+) = (S)-1-pyrroline-5-carboxylate + NADPH + 2 H(+). The catalysed reaction is L-proline + NAD(+) = (S)-1-pyrroline-5-carboxylate + NADH + 2 H(+). It functions in the pathway amino-acid biosynthesis; L-proline biosynthesis; L-proline from L-glutamate 5-semialdehyde: step 1/1. Its function is as follows. Catalyzes the reduction of 1-pyrroline-5-carboxylate (PCA) to L-proline. This is Pyrroline-5-carboxylate reductase from Vibrio alginolyticus.